We begin with the raw amino-acid sequence, 350 residues long: Inhibin beta E chain (350 aa).

The N-terminal stretch at 1–21 is a signal peptide; sequence MGLSNVQLWTILLWALAWVQS. Residues 22–236 constitute a propeptide that is removed on maturation; it reads TRSACPSCGA…EPGAGRARRR (215 aa). N-linked (GlcNAc...) asparagine glycosylation occurs at asparagine 198. 4 disulfides stabilise this stretch: cysteine 240-cysteine 248, cysteine 247-cysteine 315, cysteine 276-cysteine 347, and cysteine 280-cysteine 349.

It belongs to the TGF-beta family. In terms of assembly, homodimeric or heterodimeric through association with alpha and beta subunits, linked by one or more disulfide bonds. Inhibins are heterodimers of one alpha and one beta subunit. Activins are homo- or heterodimers of beta subunits only.

It is found in the secreted. In terms of biological role, inhibins and activins inhibit and activate, respectively, the secretion of follitropin by the pituitary gland. Inhibins/activins are involved in regulating a number of diverse functions such as hypothalamic and pituitary hormone secretion, gonadal hormone secretion, germ cell development and maturation, erythroid differentiation, insulin secretion, nerve cell survival, embryonic axial development or bone growth, depending on their subunit composition. Inhibins appear to oppose the functions of activins. Functionally, activin E is a homodimer of INHBE secreted by the liver that plays a crucial role in regulating metabolic homeostasis particularly in lipid metabolism and energy homeostasis. Plays a central role in the regulation of adipose tissue lipolysis by preventing the influx of fatty acids from adipose tissue into the liver. Mechanistically, signals via ACVR1C to activate SMAD2/3 signaling, suppressing PPARG target genes in adipose tissue, thereby reducing liver lipid content and improving glycemic control. Induces beige adipocyte formation and thermogenesis in response to cold exposure. This chain is Inhibin beta E chain (Inhbe), found in Rattus norvegicus (Rat).